Here is a 157-residue protein sequence, read N- to C-terminus: Small ribosomal subunit protein uS7 (157 aa).

This sequence belongs to the universal ribosomal protein uS7 family. Part of the 30S ribosomal subunit. Contacts proteins S9 and S11.

One of the primary rRNA binding proteins, it binds directly to 16S rRNA where it nucleates assembly of the head domain of the 30S subunit. Is located at the subunit interface close to the decoding center, probably blocks exit of the E-site tRNA. This is Small ribosomal subunit protein uS7 from Borreliella afzelii (strain PKo) (Borrelia afzelii).